Consider the following 640-residue polypeptide: DNA topoisomerase 3 (640 aa).

Residues Arg21 to Pro175 form the Toprim domain. Mg(2+)-binding residues include Glu27, Asp137, and Asp139. The region spanning Asp189–Phe618 is the Topo IA-type catalytic domain. Tyr354 functions as the O-(5'-phospho-DNA)-tyrosine intermediate in the catalytic mechanism.

The protein belongs to the type IA topoisomerase family. Requires Mg(2+) as cofactor.

It catalyses the reaction ATP-independent breakage of single-stranded DNA, followed by passage and rejoining.. Introduces a single-strand break via transesterification at a target site in duplex DNA. Releases the supercoiling and torsional tension of DNA introduced during the DNA replication and transcription by transiently cleaving and rejoining one strand of the DNA duplex. The scissile phosphodiester is attacked by the catalytic tyrosine of the enzyme, resulting in the formation of a DNA-(5'-phosphotyrosyl)-enzyme intermediate and the expulsion of a 3'-OH DNA strand. This chain is DNA topoisomerase 3 (TOP3), found in Candidozyma auris (Yeast).